The sequence spans 1495 residues: ESX secretion system protein YukB (1495 aa).

A run of 2 helical transmembrane segments spans residues 246–266 (LWLV…VAII) and 270–290 (GIFI…STVQ). 2 consecutive FtsK domains span residues 661–858 (KDDI…TDSK) and 993–1177 (QAPI…SEGY). Residues 682 to 689 (GTTGSGKS) and 1010 to 1017 (GSSGYGKS) each bind ATP.

The protein belongs to the EssC family.

It is found in the cell membrane. Functionally, required for YukE secretion. Probable component or regulator of the ESX/ESAT-6-like secretion system (BsEss). This Bacillus subtilis (strain 168) protein is ESX secretion system protein YukB (yukB).